We begin with the raw amino-acid sequence, 351 residues long: UDP-3-O-acylglucosamine N-acyltransferase (351 aa).

Histidine 240 serves as the catalytic Proton acceptor.

It belongs to the transferase hexapeptide repeat family. LpxD subfamily. As to quaternary structure, homotrimer.

The catalysed reaction is a UDP-3-O-[(3R)-3-hydroxyacyl]-alpha-D-glucosamine + a (3R)-hydroxyacyl-[ACP] = a UDP-2-N,3-O-bis[(3R)-3-hydroxyacyl]-alpha-D-glucosamine + holo-[ACP] + H(+). The protein operates within bacterial outer membrane biogenesis; LPS lipid A biosynthesis. Catalyzes the N-acylation of UDP-3-O-acylglucosamine using 3-hydroxyacyl-ACP as the acyl donor. Is involved in the biosynthesis of lipid A, a phosphorylated glycolipid that anchors the lipopolysaccharide to the outer membrane of the cell. The protein is UDP-3-O-acylglucosamine N-acyltransferase of Pseudomonas savastanoi pv. phaseolicola (strain 1448A / Race 6) (Pseudomonas syringae pv. phaseolicola (strain 1448A / Race 6)).